Consider the following 1365-residue polypeptide: Nuclear pore complex protein Nup154 (1365 aa).

Residues 1 to 508 (MTLPQAQLDF…GTHIIEVLKM (508 aa)) are required for binding to Nup93-1 and anchoring to the nuclear pore complex. The interval 508–986 (MVDVLRQILL…KSINPLKGTA (479 aa)) is required for binding to chromatin.

This sequence belongs to the non-repetitive/WGA-negative nucleoporin family. As to quaternary structure, interacts (via N-terminus) with Nup93-1. Interacts with Nup35. Interacts with cup.

The protein resides in the nucleus. Its subcellular location is the nuclear pore complex. It is found in the chromosome. The protein localises to the nucleus membrane. It localises to the cytoplasm. Component of the nuclear pore complex. Has a role in the organization of the inner nuclear membrane proteins at the nuclear envelope. In germ cells, plays a role in the nuclear localization of components of the dpp signaling pathways, such as Medea and phosphorylated Mad. Binds to chromatin, and together with Nup62 and Nup93-1, contributes to karyosome morphology and chromatin organization including attachment to the nuclear envelope in oocytes and nurse cells. Has a role in female fertility including egg chamber development; in nurse cells, has a role in the organization of F-actin in subcortical and cytoplasmic actin filaments important for the transfer of cytoplasm from nurse cells to the growing oocytes. Has a role in male spermatogenesis and fertility. Has a role in germ line cell proliferation. This is Nuclear pore complex protein Nup154 from Drosophila melanogaster (Fruit fly).